We begin with the raw amino-acid sequence, 279 residues long: Thymidylate synthase (279 aa).

141–142 (RR) is a dUMP binding site. Catalysis depends on C161, which acts as the Nucleophile. DUMP contacts are provided by residues 181–184 (RSND), N192, and 222–224 (HVY). Position 184 (D184) interacts with (6R)-5,10-methylene-5,6,7,8-tetrahydrofolate. A (6R)-5,10-methylene-5,6,7,8-tetrahydrofolate-binding site is contributed by A278.

It belongs to the thymidylate synthase family. Bacterial-type ThyA subfamily. As to quaternary structure, homodimer.

It localises to the cytoplasm. It catalyses the reaction dUMP + (6R)-5,10-methylene-5,6,7,8-tetrahydrofolate = 7,8-dihydrofolate + dTMP. Its pathway is pyrimidine metabolism; dTTP biosynthesis. Catalyzes the reductive methylation of 2'-deoxyuridine-5'-monophosphate (dUMP) to 2'-deoxythymidine-5'-monophosphate (dTMP) while utilizing 5,10-methylenetetrahydrofolate (mTHF) as the methyl donor and reductant in the reaction, yielding dihydrofolate (DHF) as a by-product. This enzymatic reaction provides an intracellular de novo source of dTMP, an essential precursor for DNA biosynthesis. The sequence is that of Thymidylate synthase from Bacillus subtilis subsp. natto.